Reading from the N-terminus, the 207-residue chain is Large ribosomal subunit protein uL4 (207 aa).

The tract at residues 45-80 is disordered; it reads RQGTHAVKNRSEVRGGGRKPWRQKGTGRARQGSTRS. A compositionally biased stretch (basic residues) spans 60-71; that stretch reads GGRKPWRQKGTG.

This sequence belongs to the universal ribosomal protein uL4 family. As to quaternary structure, part of the 50S ribosomal subunit.

Its function is as follows. One of the primary rRNA binding proteins, this protein initially binds near the 5'-end of the 23S rRNA. It is important during the early stages of 50S assembly. It makes multiple contacts with different domains of the 23S rRNA in the assembled 50S subunit and ribosome. In terms of biological role, forms part of the polypeptide exit tunnel. The sequence is that of Large ribosomal subunit protein uL4 from Oceanobacillus iheyensis (strain DSM 14371 / CIP 107618 / JCM 11309 / KCTC 3954 / HTE831).